Reading from the N-terminus, the 157-residue chain is MTNTETAVFGMGCFWSAEELFRKIKGVISTEVGFMGGTVKNPTYGQVCRGKSGHIEVVNITYNPKIVKYTDLLNLFWNNHDPTTPNRQGWDVGEQYSSHIFYFTEEQRLLAEKSFEKIQKSSDLRIVTAIKKASDFFPAEEYHQKYFMKKNNSILNF.

Cys13 is a catalytic residue.

Belongs to the MsrA Met sulfoxide reductase family.

The enzyme catalyses L-methionyl-[protein] + [thioredoxin]-disulfide + H2O = L-methionyl-(S)-S-oxide-[protein] + [thioredoxin]-dithiol. It carries out the reaction [thioredoxin]-disulfide + L-methionine + H2O = L-methionine (S)-S-oxide + [thioredoxin]-dithiol. In terms of biological role, has an important function as a repair enzyme for proteins that have been inactivated by oxidation. Catalyzes the reversible oxidation-reduction of methionine sulfoxide in proteins to methionine. The polypeptide is Peptide methionine sulfoxide reductase MsrA (Methanococcus maripaludis (strain C5 / ATCC BAA-1333)).